The following is a 983-amino-acid chain: Poly [ADP-ribose] polymerase 1 (983 aa).

PARP-type zinc fingers lie at residues 8-91 (WRAE…ESGA) and 114-194 (YGIE…KKAL). Zn(2+) is bound by residues Cys20, Cys23, His52, Cys55, Cys126, Cys129, His156, and Cys159. A disordered region spans residues 197-246 (AKTETAEARQTNSRAGTKRKNDSVDNEKSKLAKSSFDMSTSGALQPCSKE). Residues 215 to 226 (RKNDSVDNEKSK) are compositionally biased toward basic and acidic residues. The region spanning 236 to 375 (TSGALQPCSK…SVKPKRILRP (140 aa)) is the PADR1 zinc-binding domain. The tract at residues 301–345 (GPLALCPMCSGHLSFSGGLYRCHGYISEWSKCSHSTLDPDRIKGK) is zinc ribbon. Zn(2+) contacts are provided by Cys306, Cys309, Cys322, and Cys332. The tract at residues 369-397 (PKRILRPVLSGETSQGQGSKDATDSSRSE) is disordered. A compositionally biased stretch (polar residues) spans 379 to 388 (GETSQGQGSK). The 91-residue stretch at 394 to 484 (SRSERLADLK…RKLPFDKYKI (91 aa)) folds into the BRCT domain. Residues 511-611 (HCHILEDGNS…TNFQKQPGKF (101 aa)) enclose the WGR domain. In terms of domain architecture, PARP alpha-helical spans 633–751 (SSNLAPSLIE…DIEIASRIVG (119 aa)). Residues 758–983 (ESLDDKYKKL…LLKVRFKHKR (226 aa)) enclose the PARP catalytic domain.

Belongs to the ARTD/PARP family.

The protein localises to the nucleus. It carries out the reaction NAD(+) + (ADP-D-ribosyl)n-acceptor = nicotinamide + (ADP-D-ribosyl)n+1-acceptor + H(+).. It catalyses the reaction L-aspartyl-[protein] + NAD(+) = 4-O-(ADP-D-ribosyl)-L-aspartyl-[protein] + nicotinamide. The catalysed reaction is L-glutamyl-[protein] + NAD(+) = 5-O-(ADP-D-ribosyl)-L-glutamyl-[protein] + nicotinamide. Its function is as follows. Involved in the base excision repair (BER) pathway, by catalyzing the poly(ADP-ribosyl)ation of a limited number of acceptor proteins involved in chromatin architecture and in DNA metabolism. This modification follows DNA damages and appears as an obligatory step in a detection/signaling pathway leading to the reparation of DNA strand breaks. This is Poly [ADP-ribose] polymerase 1 (PARP1) from Arabidopsis thaliana (Mouse-ear cress).